The following is a 229-amino-acid chain: Ribonuclease 3 (229 aa).

One can recognise an RNase III domain in the interval 5 to 127 (LSRLERQLGY…LIGAIYLDAG (123 aa)). Residue E40 participates in Mg(2+) binding. The active site involves D44. Residues D113 and E116 each contribute to the Mg(2+) site. E116 is an active-site residue. Residues 154-224 (DPKTRLQEFL…AAAALIALGV (71 aa)) enclose the DRBM domain.

Belongs to the ribonuclease III family. Homodimer. The cofactor is Mg(2+).

It is found in the cytoplasm. It catalyses the reaction Endonucleolytic cleavage to 5'-phosphomonoester.. Functionally, digests double-stranded RNA. Involved in the processing of primary rRNA transcript to yield the immediate precursors to the large and small rRNAs (23S and 16S). Processes some mRNAs, and tRNAs when they are encoded in the rRNA operon. Processes pre-crRNA and tracrRNA of type II CRISPR loci if present in the organism. This is Ribonuclease 3 from Pseudomonas syringae pv. syringae (strain B728a).